A 322-amino-acid polypeptide reads, in one-letter code: CXXC-type zinc finger protein 5 (322 aa).

Residues 1-10 (MSSLGGGSQD) are compositionally biased toward gly residues. The segment at 1 to 100 (MSSLGGGSQD…SGGGSMMGGE (100 aa)) is disordered. 2 stretches are compositionally biased toward low complexity: residues 11 to 20 (AGGSSSSSTN) and 28 to 52 (SGPK…VADD). Thr-53 carries the phosphothreonine modification. Positions 87 to 97 (SSGGSGGGSMM) are enriched in gly residues. The segment at 256–297 (GKKKRKRCGMCAPCRRRINCEQCSSCRNRKTGHQICKFRKCE) adopts a CXXC-type zinc-finger fold. Positions 257 to 262 (KKKRKR) match the Nuclear localization signal motif. Residues Cys-263, Cys-266, Cys-269, Cys-275, Cys-278, Cys-281, Cys-291, and Cys-296 each coordinate Zn(2+).

In terms of assembly, interacts with DVL1. Interacts with RBPJ.

Its subcellular location is the nucleus. The protein localises to the cytoplasm. In terms of biological role, may indirectly participate in activation of the NF-kappa-B and MAPK pathways. Acts as a mediator of BMP4-mediated modulation of canonical Wnt signaling activity in neural stem cells. Required for DNA damage-induced ATM phosphorylation, p53 activation and cell cycle arrest. Involved in myelopoiesis. Binds to the oxygen responsive element of COX4I2 and represses its transcription under hypoxia conditions (4% oxygen), as well as normoxia conditions (20% oxygen). May repress COX4I2 transactivation induced by CHCHD2 and RBPJ. Binds preferentially to DNA containing cytidine-phosphate-guanosine (CpG) dinucleotides over CpH (H=A, T, and C), hemimethylated-CpG and hemimethylated-hydroxymethyl-CpG. This Pongo abelii (Sumatran orangutan) protein is CXXC-type zinc finger protein 5 (CXXC5).